Here is a 516-residue protein sequence, read N- to C-terminus: Adenine DNA glycosylase (516 aa).

Residues 1 to 23 (MKKLRASVRSHKKQPANHKRRGK) are compositionally biased toward basic residues. Residues 1-38 (MKKLRASVRSHKKQPANHKRRGKCALSSSQAKPSGLDG) form a disordered region. Glu-105 acts as the Proton donor/acceptor in catalysis. Residues Cys-261, Cys-268, Cys-271, and Cys-277 each contribute to the [4Fe-4S] cluster site. The region spanning 335–467 (PREEYSATCV…AMKKVFRVYE (133 aa)) is the Nudix hydrolase domain. The Nudix box signature appears at 376–398 (VTLEPSGQHQHKALLQELQHWSA). The tract at residues 474 to 516 (CKGSKRPQVCTPSSRKKPSRGQQVLDRFFQRHIPTHKPNSTTQ) is disordered.

This sequence belongs to the Nth/MutY family. Requires [4Fe-4S] cluster as cofactor. In terms of tissue distribution, expressed in brain, spleen, heart, liver and kidney.

The protein localises to the nucleus. It localises to the mitochondrion. It carries out the reaction Hydrolyzes free adenine bases from 7,8-dihydro-8-oxoguanine:adenine mismatched double-stranded DNA, leaving an apurinic site.. In terms of biological role, involved in oxidative DNA damage repair. Initiates repair of A*oxoG to C*G by removing the inappropriately paired adenine base from the DNA backbone. Possesses both adenine and 2-OH-A DNA glycosylase activities. This Rattus norvegicus (Rat) protein is Adenine DNA glycosylase (Mutyh).